Here is an 828-residue protein sequence, read N- to C-terminus: Protein ELFN1 (828 aa).

The signal sequence occupies residues 1-25 (MAGHGWGTAWVLVAAATLLHAGGLA). Over 26-418 (QGDCWLIEGD…VPSPSTATHY (393 aa)) the chain is Extracellular. 5 LRR repeats span residues 61-82 (TIVDLRLNENRIRSVQYASLSR), 85-106 (NLTYLNLTKNEIGYIEDGAFSG), 109-130 (NLQVLQLGYNRLRNLTEGMLRG), 133-154 (KLEYLYLQANLIEVVMASAFWE), and 157-178 (NIVNIDLSMNRIQQLGSGTFAG). N-linked (GlcNAc...) asparagine glycans are attached at residues N85, N90, and N122. Residues 190–253 (NPFYCSCELL…LSKLQSVCTE (64 aa)) form the LRRCT domain. An N-linked (GlcNAc...) asparagine glycan is attached at N210. The segment at 258 to 293 (AEVLGPPRPVPGRSQPGHSPPPPPPEPSDMPCADDE) is disordered. Positions 275-285 (HSPPPPPPEPS) are enriched in pro residues. Positions 312–399 (QTEARPSMKV…HNHTCLTICL (88 aa)) constitute a Fibronectin type-III domain. An N-linked (GlcNAc...) asparagine glycan is attached at N376. The helical transmembrane segment at 419–439 (IMTILGCLFGMVLVLGAVYYC) threads the bilayer. Topologically, residues 440 to 828 (LRKRRRQEEK…WKGVSAQHKS (389 aa)) are cytoplasmic. Phosphoserine is present on residues S460 and S646. 2 disordered regions span residues 627–674 (HHSV…IEKS) and 697–731 (KSRQYGEHRHSYPGSHPAEPPAPPPPPPTHEGLGG). A compositionally biased stretch (low complexity) spans 638 to 652 (RASTSSSGSARSPRT). A compositionally biased stretch (basic and acidic residues) spans 697 to 706 (KSRQYGEHRH). The span at 714–725 (AEPPAPPPPPPT) shows a compositional bias: pro residues.

As to quaternary structure, interacts with PPP1CA. Selectively expressed in perialvear somatostatin (Sst)-containing interneurons.

It is found in the membrane. Its subcellular location is the cell projection. The protein localises to the dendrite. Functionally, postsynaptic protein that regulates circuit dynamics in the central nervous system by modulating the temporal dynamics of interneuron recruitment. Specifically present in excitatory synapses onto oriens-lacunosum molecular (OLM) interneurons and acts as a regulator of presynaptic release probability to direct the formation of highly facilitating pyramidal-OLM synapses. Inhibits phosphatase activity of protein phosphatase 1 (PP1) complexes. In Mus musculus (Mouse), this protein is Protein ELFN1 (Elfn1).